A 1013-amino-acid chain; its full sequence is Tolloid-like protein 1 (1013 aa).

Positions 1-30 (MGLGTLSPRMLVWLVASGIVFYGELWVCAG) are cleaved as a signal peptide. Residues 31–147 (LDYDYTFDGN…GQNEKNRVPR (117 aa)) constitute a propeptide that is removed on maturation. The region spanning 148–347 (AATSRTERIW…AQARKLYRCP (200 aa)) is the Peptidase M12A domain. N-linked (GlcNAc...) asparagine glycosylation occurs at Asn169. Cystine bridges form between Cys190–Cys346, Cys210–Cys232, Cys212–Cys213, and Cys349–Cys375. Residue His240 participates in Zn(2+) binding. Residue Glu241 is part of the active site. Positions 244 and 250 each coordinate Zn(2+). CUB domains follow at residues 349–461 (CGET…YEAI) and 462–574 (CGGE…FFKE). Asn359 and Asn390 each carry an N-linked (GlcNAc...) asparagine glycan. 15 disulfide bridges follow: Cys402-Cys424, Cys462-Cys488, Cys515-Cys537, Cys578-Cys590, Cys586-Cys599, Cys601-Cys614, Cys618-Cys644, Cys671-Cys693, Cys734-Cys745, Cys741-Cys754, Cys756-Cys769, Cys774-Cys800, Cys827-Cys849, Cys887-Cys917, and Cys944-Cys966. The region spanning 574–615 (EEDECAKPDRGGCEQRCLNTLGSYQCACEPGYELGPDRRSCE) is the EGF-like 1; calcium-binding domain. A CUB 3 domain is found at 618–730 (CGGLLTKLNG…KGFKAHFFSD (113 aa)). Asn626 carries an N-linked (GlcNAc...) asparagine glycan. The 41-residue stretch at 730 to 770 (DKDECSKDNGGCQHECVNTMGSYMCQCRNGFVLHDNKHDCK) folds into the EGF-like 2; calcium-binding domain. CUB domains are found at residues 774–886 (CEQK…HSTE) and 887–1003 (CGGR…YKSI).

Zn(2+) is required as a cofactor.

The protein resides in the secreted. Its function is as follows. Protease which processes procollagen C-propeptides, such as chordin, pro-biglycan and pro-lysyl oxidase. Required for the embryonic development. Predominant protease, which in the development, influences dorsal-ventral patterning and skeletogenesis. This chain is Tolloid-like protein 1 (TLL1), found in Homo sapiens (Human).